A 335-amino-acid polypeptide reads, in one-letter code: Deoxyhypusine hydroxylase (335 aa).

HEAT-like PBS-type repeat units lie at residues 71–97, 104–130, 200–233, 238–264, and 271–298; these read LKHELAYCLGQTRNPESVPFLQQVAKD, CRHEAAEALGALGYEDSLEILKALRDN, LRYRAMFALRDLASPPDLPTATRAVEALAKGLKD, FRHEIAFVFGQLCHPASIPSLTEALSN, and VRHEAAEALGSLGDCEGVEETLRKFLND. Histidine 73, glutamate 74, histidine 106, and glutamate 107 together coordinate Fe cation. Fe cation-binding residues include histidine 240, glutamate 241, histidine 273, and glutamate 274.

The protein belongs to the deoxyhypusine hydroxylase family. It depends on Fe(2+) as a cofactor.

It localises to the cytoplasm. Its subcellular location is the nucleus. The catalysed reaction is [eIF5A protein]-deoxyhypusine + AH2 + O2 = [eIF5A protein]-hypusine + A + H2O. It functions in the pathway protein modification; eIF5A hypusination. Its function is as follows. Catalyzes the hydroxylation of the N(6)-(4-aminobutyl)-L-lysine intermediate to form hypusine, an essential post-translational modification only found in mature eIF-5A factor. The polypeptide is Deoxyhypusine hydroxylase (lia1) (Neosartorya fischeri (strain ATCC 1020 / DSM 3700 / CBS 544.65 / FGSC A1164 / JCM 1740 / NRRL 181 / WB 181) (Aspergillus fischerianus)).